We begin with the raw amino-acid sequence, 154 residues long: 17.0 kDa class II heat shock protein (154 aa).

Residues 39–154 (DARAMAATPA…KPKTIEIKVA (116 aa)) form the sHSP domain.

The protein belongs to the small heat shock protein (HSP20) family.

It localises to the cytoplasm. This chain is 17.0 kDa class II heat shock protein (HSP18), found in Zea mays (Maize).